Here is a 257-residue protein sequence, read N- to C-terminus: Protein Cmaq_1209 (257 aa).

The protein belongs to the CinA family.

The chain is Protein Cmaq_1209 from Caldivirga maquilingensis (strain ATCC 700844 / DSM 13496 / JCM 10307 / IC-167).